The sequence spans 244 residues: Gas vesicle protein F (244 aa).

This sequence belongs to the gas vesicle GvpF/GvpL family. As to quaternary structure, binds GvpA.

It is found in the gas vesicle. Functionally, a minor component of the gas vesicle, may be involved in preventing GvpA aggregation during gas vesicle nucleation. Gas vesicles (GV) are hollow, gas filled proteinaceous nanostructures. During planktonic growth they allow positioning of the organism at a favorable depth for light or nutrient acquisition. In terms of biological role, cluster expression in E.coli (gvpA1-gvpA2-gvpC-gvpN-gvpJ-gvpK-gvpF-gvpG-gvpV-gvpW) allows cells to float and produces irregularly shaped gas vesicles. The polypeptide is Gas vesicle protein F (Nostoc sp. (strain PCC 7120 / SAG 25.82 / UTEX 2576)).